We begin with the raw amino-acid sequence, 93 residues long: MDGIKYAVFTDKGVRLLGKNQYTSNVESGSTRTEIKHWVELFFGVKVQAMNSHRLPGKGRRMGPIMGHTMHYRRMIITLQPGYSIPPLRKKRT.

Belongs to the universal ribosomal protein uL23 family. Part of the 50S ribosomal subunit.

Its subcellular location is the plastid. The protein resides in the chloroplast. Functionally, binds to 23S rRNA. The protein is Large ribosomal subunit protein uL23cz/uL23cy (rpl23-A) of Oenothera elata subsp. hookeri (Hooker's evening primrose).